Here is a 156-residue protein sequence, read N- to C-terminus: Histone H2B.2 (156 aa).

Basic and acidic residues-rich tracts occupy residues 1-10 and 24-58; these read MAPKKDEKPA and AKAE…GEKK. A disordered region spans residues 1-63; it reads MAPKKDEKPA…DGEKKDKKKK (63 aa). An N6-acetyllysine mark is found at Lys40 and Lys41. A Glycyl lysine isopeptide (Lys-Gly) (interchain with G-Cter in ubiquitin) cross-link involves residue Lys152.

It belongs to the histone H2B family. In terms of assembly, the nucleosome is a histone octamer containing two molecules each of H2A, H2B, H3 and H4 assembled in one H3-H4 heterotetramer and two H2A-H2B heterodimers. The octamer wraps approximately 147 bp of DNA. The N-terminus is blocked. Post-translationally, can be acetylated to form H2BK33ac and H2BK34ac. Acetylated mainly on the ubiquitinated form. In terms of processing, monoubiquitinated to form H2BK143ub1; which is increased during the light period and may give a specific tag for epigenetic transcriptional activation.

It is found in the nucleus. Its subcellular location is the chromosome. In terms of biological role, core component of nucleosome. Nucleosomes wrap and compact DNA into chromatin, limiting DNA accessibility to the cellular machineries which require DNA as a template. Histones thereby play a central role in transcription regulation, DNA repair, DNA replication and chromosomal stability. DNA accessibility is regulated via a complex set of post-translational modifications of histones, also called histone code, and nucleosome remodeling. In Chlamydomonas reinhardtii (Chlamydomonas smithii), this protein is Histone H2B.2.